Consider the following 183-residue polypeptide: Cell division protein ZapC (183 aa).

This sequence belongs to the ZapC family. As to quaternary structure, interacts directly with FtsZ.

The protein localises to the cytoplasm. In terms of biological role, contributes to the efficiency of the cell division process by stabilizing the polymeric form of the cell division protein FtsZ. Acts by promoting interactions between FtsZ protofilaments and suppressing the GTPase activity of FtsZ. This chain is Cell division protein ZapC, found in Xenorhabdus bovienii (strain SS-2004) (Xenorhabdus nematophila subsp. bovienii).